Consider the following 470-residue polypeptide: Putative multidrug resistance protein MdtD (470 aa).

At 1–11 (MTEFPDNTRWQ) the chain is on the periplasmic side. Residues 12-32 (LWIVAFGFFMQSLDTTIVNTA) traverse the membrane as a helical segment. The Cytoplasmic portion of the chain corresponds to 33-48 (LPSMAKSLGESPLHMH). The chain crosses the membrane as a helical span at residues 49 to 69 (MVVVSYVLTVAVMLPASGWLA). Over 70–76 (DKIGVRN) the chain is Periplasmic. The chain crosses the membrane as a helical span at residues 77 to 97 (IFFAAIVLFTLGSLFCALSGT). Topologically, residues 98–101 (LNQL) are cytoplasmic. The chain crosses the membrane as a helical span at residues 102–124 (VLARVLQGVGGAMMVPVGRLTVM). Residues 125–137 (KIVPRAQYMAAMT) lie on the Periplasmic side of the membrane. A helical membrane pass occupies residues 138–158 (FVALPGQIGPLLGPALGGVLV). Topologically, residues 159-164 (EYASWH) are cytoplasmic. Residues 165–185 (WIFLINIPVGIVGAMATFMLM) traverse the membrane as a helical segment. Residues 186-196 (PNYTIETRRFD) are Periplasmic-facing. A helical membrane pass occupies residues 197 to 217 (LPGFLLLAIGMAVLTLALDGS). The Cytoplasmic segment spans residues 218 to 224 (KSMGISP). A helical membrane pass occupies residues 225-245 (WTLAGLAAGGAAAILLYLFHA). Over 246–262 (KKNSGALFSLRLFRTPT) the chain is Periplasmic. A helical membrane pass occupies residues 263-283 (FSLGLLGSFAGRIGSGMLPFM). The Cytoplasmic portion of the chain corresponds to 284-285 (TP). Residues 286–306 (VFLQIGLGFSPFHAGLMMIPM) form a helical membrane-spanning segment. The Periplasmic portion of the chain corresponds to 307 to 341 (VLGSMGMKRIVVQIVNRFGYRRVLVATTLGLALVS). A helical membrane pass occupies residues 342 to 362 (LLFMSVALLGWYYLLPLVLLL). Over 363–395 (QGMVNSARFSSMNTLTLKDLPDTLASSGNSLLS) the chain is Cytoplasmic. A helical membrane pass occupies residues 396 to 416 (MIMQLSMSIGVTIAGMLLGMF). Residues 417–430 (GQQHIGIDSSATHH) lie on the Periplasmic side of the membrane. Residues 431–451 (VFMYTWLCMAVIIALPAIIFA) traverse the membrane as a helical segment. Topologically, residues 452 to 470 (RVPNDTQQNMVISRRKRSL) are cytoplasmic.

Belongs to the major facilitator superfamily. TCR/Tet family.

The protein resides in the cell inner membrane. In Salmonella typhi, this protein is Putative multidrug resistance protein MdtD.